The sequence spans 147 residues: Large ribosomal subunit protein uL13 (147 aa).

It belongs to the universal ribosomal protein uL13 family. As to quaternary structure, part of the 50S ribosomal subunit.

This protein is one of the early assembly proteins of the 50S ribosomal subunit, although it is not seen to bind rRNA by itself. It is important during the early stages of 50S assembly. In Lactiplantibacillus plantarum (strain ATCC BAA-793 / NCIMB 8826 / WCFS1) (Lactobacillus plantarum), this protein is Large ribosomal subunit protein uL13.